The chain runs to 154 residues: Interleukin-2 (154 aa).

Residues 1–20 form the signal peptide; sequence MCKMQLLSCIALSLVLVANS. Threonine 23 carries an O-linked (GalNAc...) threonine glycan. A disulfide bond links cysteine 78 and cysteine 126.

Belongs to the IL-2 family.

It is found in the secreted. Its function is as follows. Cytokine produced by activated CD4-positive helper T-cells and to a lesser extend activated CD8-positive T-cells and natural killer (NK) cells that plays pivotal roles in the immune response and tolerance. Binds to a receptor complex composed of either the high-affinity trimeric IL-2R (IL2RA/CD25, IL2RB/CD122 and IL2RG/CD132) or the low-affinity dimeric IL-2R (IL2RB and IL2RG). Interaction with the receptor leads to oligomerization and conformation changes in the IL-2R subunits resulting in downstream signaling starting with phosphorylation of JAK1 and JAK3. In turn, JAK1 and JAK3 phosphorylate the receptor to form a docking site leading to the phosphorylation of several substrates including STAT5. This process leads to activation of several pathways including STAT, phosphoinositide-3-kinase/PI3K and mitogen-activated protein kinase/MAPK pathways. Functions as a T-cell growth factor and can increase NK-cell cytolytic activity as well. Promotes strong proliferation of activated B-cells and subsequently immunoglobulin production. Plays a pivotal role in regulating the adaptive immune system by controlling the survival and proliferation of regulatory T-cells, which are required for the maintenance of immune tolerance. Moreover, participates in the differentiation and homeostasis of effector T-cell subsets, including Th1, Th2, Th17 as well as memory CD8-positive T-cells. This is Interleukin-2 (IL2) from Mirounga angustirostris (Northern elephant seal).